The chain runs to 362 residues: Fe-S cluster assembly protein DRE2 (362 aa).

Residues 1 to 28 (MAPGLDLTPDFHPPTTTTTTTNNAPPQQ) are disordered. A compositionally biased stretch (low complexity) spans 15–28 (TTTTTTTNNAPPQQ). Positions 24 to 165 (APPQQRTLLL…KPEYAEEEAV (142 aa)) are N-terminal SAM-like domain. The interval 166–254 (PLRFGKKKAA…EETLLTEEDL (89 aa)) is linker. [2Fe-2S] cluster contacts are provided by cysteine 264, cysteine 275, cysteine 278, and cysteine 280. Residues 264–280 (CQPQPGKKRRACKDCTC) are fe-S binding site A. Positions 325, 328, 336, and 339 each coordinate [4Fe-4S] cluster. 2 short sequence motifs (cx2C motif) span residues 325-328 (CGSC) and 336-339 (CSDC). The tract at residues 325–339 (CGSCYLGDAFRCSDC) is fe-S binding site B.

It belongs to the anamorsin family. As to quaternary structure, monomer. Interacts with TAH18. Interacts with MIA40. Requires [2Fe-2S] cluster as cofactor. [4Fe-4S] cluster is required as a cofactor.

It localises to the cytoplasm. The protein localises to the mitochondrion intermembrane space. Component of the cytosolic iron-sulfur (Fe-S) protein assembly (CIA) machinery required for the maturation of extramitochondrial Fe-S proteins. Part of an electron transfer chain functioning in an early step of cytosolic Fe-S biogenesis, facilitating the de novo assembly of a [4Fe-4S] cluster on the scaffold complex CFD1-NBP35. Electrons are transferred to DRE2 from NADPH via the FAD- and FMN-containing protein TAH18. TAH18-DRE2 are also required for the assembly of the diferric tyrosyl radical cofactor of ribonucleotide reductase (RNR), probably by providing electrons for reduction during radical cofactor maturation in the catalytic small subunit RNR2. This chain is Fe-S cluster assembly protein DRE2, found in Chaetomium globosum (strain ATCC 6205 / CBS 148.51 / DSM 1962 / NBRC 6347 / NRRL 1970) (Soil fungus).